Here is a 482-residue protein sequence, read N- to C-terminus: MPEEPVDSDASKLLESLSINKQGDSAPIKDEKPVVESENKVSDEQNSEPTKEPETKTETENNDSNLISSSYEVQVKLADLQADPNSPLYSVKSFEELGLSPELLKGLYAMKFNKPSKIQEKALPLLISNPPKNMIGQSQSGTGKTAAFSLTMLSRVDVNDPNTQCICLSPTRELARQTLEVITTMGKFTKVTTQLVVPQAMEKNQGTQAHIVVGTPGTLLDMIKRKLLRTGKVKVFVLDEADNMLDGQGLAAQCIRVKKVLPTSCQLVLFSATFPTEVRKYAEKFVPNANSLELKQEELNVDAIKQLYMDCDSEKHKAEVLSELYGLLTIGSSIIFVKTKATANYLYAKMKSEGHACSILHSDLDNSERDKLIDDFREGRSKVLITTNVLARGIDIASVSMVVNYDIPVDKDDKPDPSTYLHRIGRTGRFGRVGVAVSFVHDKKSYEDLEQIRSYFNDIEMTRVPTDDWDEVEKIVKKVLKK.

The tract at residues 1-67 (MPEEPVDSDA…ETENNDSNLI (67 aa)) is disordered. Basic and acidic residues predominate over residues 27-59 (PIKDEKPVVESENKVSDEQNSEPTKEPETKTET). Residues 92-120 (KSFEELGLSPELLKGLYAMKFNKPSKIQE) carry the Q motif motif. One can recognise a Helicase ATP-binding domain in the interval 125-292 (LLISNPPKNM…EKFVPNANSL (168 aa)). Residue 138–145 (SQSGTGKT) coordinates ATP. Positions 239-242 (DEAD) match the DEAD box motif. The region spanning 303–480 (AIKQLYMDCD…EVEKIVKKVL (178 aa)) is the Helicase C-terminal domain.

The protein belongs to the DEAD box helicase family. DDX19/DBP5 subfamily. As to quaternary structure, associates with the nuclear pore complex.

The protein localises to the cytoplasm. It localises to the nucleus. Its subcellular location is the nuclear pore complex. The protein resides in the nucleus membrane. It catalyses the reaction ATP + H2O = ADP + phosphate + H(+). In terms of biological role, ATP-dependent RNA helicase associated with the nuclear pore complex and essential for mRNA export from the nucleus. May participate in a terminal step of mRNA export through the removal of proteins that accompany mRNA through the nucleopore complex. May also be involved in early transcription. In Meyerozyma guilliermondii (strain ATCC 6260 / CBS 566 / DSM 6381 / JCM 1539 / NBRC 10279 / NRRL Y-324) (Yeast), this protein is ATP-dependent RNA helicase DBP5 (DBP5).